The following is a 375-amino-acid chain: Killer cell immunoglobulin-like receptor 2DL5A (375 aa).

A signal peptide spans Met-1–Thr-21. The Extracellular portion of the chain corresponds to His-22–His-238. Ig-like C2-type domains lie at Gly-42–Ser-102 and Gly-137–Ser-200. Cys-49 and Cys-95 are disulfide-bonded. N-linked (GlcNAc...) asparagine glycosylation is found at Asn-139, Asn-173, and Asn-218. Cys-144 and Cys-193 are disulfide-bonded. Residues Val-213–Thr-233 form a disordered region. Positions Ser-219 to Ser-231 are enriched in low complexity. Residues Leu-239–Leu-259 form a helical membrane-spanning segment. The Cytoplasmic portion of the chain corresponds to Leu-260–Ile-375. The segment at Ala-334–Ile-375 is disordered. The span at Arg-355–Ala-366 shows a compositional bias: polar residues.

It belongs to the immunoglobulin superfamily.

The protein resides in the cell membrane. In terms of biological role, receptor on natural killer (NK) cells for HLA-C alleles. Inhibits the activity of NK cells thus preventing cell lysis. In Homo sapiens (Human), this protein is Killer cell immunoglobulin-like receptor 2DL5A (KIR2DL5A).